A 256-amino-acid chain; its full sequence is 7-cyano-7-deazaguanine synthase (256 aa).

The disordered stretch occupies residues 1-22; that stretch reads MTDASADALTSPSNSGASQDTS. Over residues 8–22 the composition is skewed to polar residues; the sequence is ALTSPSNSGASQDTS. Residue 30-40 coordinates ATP; it reads LSGGLDSVTCL. Residues Cys220, Cys230, Cys233, and Cys236 each contribute to the Zn(2+) site.

The protein belongs to the QueC family. The cofactor is Zn(2+).

It catalyses the reaction 7-carboxy-7-deazaguanine + NH4(+) + ATP = 7-cyano-7-deazaguanine + ADP + phosphate + H2O + H(+). It functions in the pathway purine metabolism; 7-cyano-7-deazaguanine biosynthesis. Functionally, catalyzes the ATP-dependent conversion of 7-carboxy-7-deazaguanine (CDG) to 7-cyano-7-deazaguanine (preQ(0)). The sequence is that of 7-cyano-7-deazaguanine synthase from Psychrobacter sp. (strain PRwf-1).